A 379-amino-acid polypeptide reads, in one-letter code: NADH-quinone oxidoreductase subunit D 1 (379 aa).

Belongs to the complex I 49 kDa subunit family. NDH-1 is composed of 14 different subunits. Subunits NuoB, C, D, E, F, and G constitute the peripheral sector of the complex.

It is found in the cell inner membrane. The enzyme catalyses a quinone + NADH + 5 H(+)(in) = a quinol + NAD(+) + 4 H(+)(out). In terms of biological role, NDH-1 shuttles electrons from NADH, via FMN and iron-sulfur (Fe-S) centers, to quinones in the respiratory chain. The immediate electron acceptor for the enzyme in this species is believed to be ubiquinone. Couples the redox reaction to proton translocation (for every two electrons transferred, four hydrogen ions are translocated across the cytoplasmic membrane), and thus conserves the redox energy in a proton gradient. The protein is NADH-quinone oxidoreductase subunit D 1 of Anaeromyxobacter sp. (strain K).